We begin with the raw amino-acid sequence, 192 residues long: Putative cyclic ADP-D-ribose synthase ThsB1 (192 aa).

Belongs to the Thoeris B TIR-like family. In terms of assembly, monomer; not seen to interact with ThsA.

It is found in the cytoplasm. Activated upon phage infection. TIR-like domain-containing component of the Thoeris antiviral defense system, composed of ThsA and ThsB. Expression of ThsA and ThsB in B.subtilis (strain BEST7003) confers resistance to phages SBSphiC, SBSphiJ and SPO1. Phage infection activates this protein so that 30 to 45 minutes post-infection with phage SPO1 it generates a signal molecule that in turn activates the NAD(+) hydrolase activity of ThsA. The signal is similar to cyclic ADP-D-ribose, but how it differs is unknown. In vitro purified (but unactivated) ThsB has no NAD(+) hydrolyzing activity, no activity on AMP, CMP, GMP or UMP, does not alter the activity of ThsA, does not bind DNA. Hydrolyzes NAD(+) to make a cyclic ADP-D-ribose (cADPR) signaling molecule; might make 3'cADPR. This chain is Putative cyclic ADP-D-ribose synthase ThsB1, found in Bacillus cereus (strain MSX-D12).